We begin with the raw amino-acid sequence, 240 residues long: Oxygen-insensitive NADPH nitroreductase (240 aa).

Residues 11–15, serine 39, glutamine 67, 128–131, and 167–169 each bind FMN; these read HRSIR, YIGG, and KPR.

Belongs to the flavin oxidoreductase frp family. As to quaternary structure, homodimer. It depends on FMN as a cofactor.

In terms of biological role, catalyzes the reduction of nitroaromatic compounds using NADPH. Has a broad electron acceptor specificity. Reduces nitrofurazone by a ping-pong bi-bi mechanism possibly to generate a two-electron transfer product. Major oxygen-insensitive nitroreductase in E.coli. In Escherichia coli (strain K12), this protein is Oxygen-insensitive NADPH nitroreductase (nfsA).